The sequence spans 435 residues: MTQVVNVVGAGLAGSEAAYQLAQRGVKVNLIEMRPVKQTPAHHTDKFAELVCSNSLRGNALTNAVGVLKEEMRQLDSLIISAADKARVPAGGALAVDRHDFAGYVTETLKNHPNITVLNEEINSIPEGYTIIATGPLTTDKLANEIVEATGKDQLYFYDAAAPIIEKDSIDMNKVYLKSRYDKGEAAYLNCPMTEDEFNTFYDALMEAEVAPVNEFEKEKYFEGCMPFEVMAERGRKTLLFGPMKPVGLEDPKTGERPYAVVQLRQDDAAGTLYNIVGFQTHLKWGAQKDVIRLIPGLENVEIVRYGVMHRNTFINSPDVLTETYELKGREELYFAGQMTGVEGYVESAASGLVAGINVAHKMLNKGEVIFPRETMIGSMAYYISHAKNEKNFQPMNANFGLLTTLEKKVKDKKLRYEKLADRALTYLDNYKQTL.

Gly9–Gly14 serves as a coordination point for FAD.

Belongs to the MnmG family. TrmFO subfamily. It depends on FAD as a cofactor.

The protein resides in the cytoplasm. The catalysed reaction is uridine(54) in tRNA + (6R)-5,10-methylene-5,6,7,8-tetrahydrofolate + NADH + H(+) = 5-methyluridine(54) in tRNA + (6S)-5,6,7,8-tetrahydrofolate + NAD(+). It catalyses the reaction uridine(54) in tRNA + (6R)-5,10-methylene-5,6,7,8-tetrahydrofolate + NADPH + H(+) = 5-methyluridine(54) in tRNA + (6S)-5,6,7,8-tetrahydrofolate + NADP(+). Functionally, catalyzes the folate-dependent formation of 5-methyl-uridine at position 54 (M-5-U54) in all tRNAs. The chain is Methylenetetrahydrofolate--tRNA-(uracil-5-)-methyltransferase TrmFO from Staphylococcus saprophyticus subsp. saprophyticus (strain ATCC 15305 / DSM 20229 / NCIMB 8711 / NCTC 7292 / S-41).